Consider the following 677-residue polypeptide: Envelope glycoprotein (677 aa).

Residues 1 to 33 (MGSGYQLLQLPRERFRKTSFLVWVIILFQRAIS) form the signal peptide. Residues 34 to 651 (MPLGIVTNST…DLNLWTGWRQ (618 aa)) lie on the Extracellular side of the membrane. A glycan (N-linked (GlcNAc...) asparagine; by host) is linked at Asn-41. Cystine bridges form between Cys-54/Cys-610, Cys-109/Cys-136, Cys-122/Cys-148, Cys-512/Cys-557, and Cys-602/Cys-609. The segment at 55 to 202 (RDKLSSTSQL…HFWKATPAHE (148 aa)) is receptor-binding. Residues Asn-205, Asn-239, Asn-258, Asn-269, Asn-297, Asn-317, Asn-318, Asn-339, Asn-406, Asn-420, Asn-435, and Asn-463 are each glycosylated (N-linked (GlcNAc...) asparagine; by host). A mucin-like region region spans residues 306–486 (NLHFQILSTH…PSQPGFTINT (181 aa)). Over residues 315 to 326 (HTNNSSDQSPAG) the composition is skewed to polar residues. Disordered stretches follow at residues 315-349 (HTNNSSDQSPAGTVQGKISYHPPTNNSELVPTDSP), 370-482 (NGET…QPGF), and 489-508 (KVADSLSPTRKQKRSVRQNT). Polar residues-rich tracts occupy residues 370–421 (NGET…ASNE) and 429–472 (NPIQ…TSPG). The fusion peptide stretch occupies residues 525–540 (GAAVGLAWIPYFGPAA). The stretch at 555 to 596 (LICGLRQLANETTQALQLFLRATTELRTYSLLNRKAIDFLLQ) forms a coiled coil. The N-linked (GlcNAc...) asparagine; by host glycan is linked to Asn-564. A coiled-coil region spans residues 616–635 (WTKNITDEINQIKHDFIDNP). N-linked (GlcNAc...) asparagine; by host glycosylation is present at Asn-619. Residues 652-672 (WIPAGIGIIGVIIAIIALLCI) form a helical membrane-spanning segment. Residues Cys-671 and Cys-673 are each lipidated (S-palmitoyl cysteine; by host). Residues 673–677 (CKILC) are Cytoplasmic-facing.

The protein belongs to the filoviruses glycoprotein family. As to quaternary structure, homotrimer; each monomer consists of a GP1 and a GP2 subunit linked by disulfide bonds. The resulting peplomers (GP1,2) protrude from the virus surface as spikes. Interacts with host integrin alpha-V/ITGAV. Interacts with host CLEC10A. Binds also to host CD209 and CLEC4M/DC-SIGN(R). Interacts with host FOLR1. Interacts with BST2; this interaction inhibits the antiviral effect of BST2 and this allows viral release from infected cells. Interacts with host FCN1; this interaction enhances viral entry. Interacts with host TLR4; this interaction induces cell death in T-lymphocytes or proinflammatory cytokines and SOCS1 production in monocytes. Interacts with host entry receptor NPC1. In terms of assembly, GP1 and GP2delta are part of GP1,2delta soluble complexes released by ectodomain shedding. Post-translationally, the signal peptide region modulates GP's high mannose glycosylation, thereby determining the efficiency of the interactions with DC-SIGN(R). N-glycosylated. In terms of processing, O-glycosylated in the mucin-like region. Post-translationally, palmitoylation of GP2 is not required for its function. Specific enzymatic cleavages in vivo yield mature proteins. The precursor is processed into GP1 and GP2 by host cell furin in the trans Golgi, and maybe by other host proteases, to yield the mature GP1 and GP2 proteins. The cleavage site corresponds to the furin optimal cleavage sequence [KR]-X-[KR]-R. This cleavage does not seem to be required for function. After the internalization of the virus into cell endosomes, GP1 C-terminus is removed by the endosomal proteases cathepsin B, cathepsin L, or both, leaving a 19-kDa N-terminal fragment which is further digested by cathepsin B. Proteolytic processing of GP1,2 by host ADAM17 can remove the transmembrane anchor of GP2 and leads to shedding of complexes consisting in GP1 and truncated GP2 (GP1,2delta).

The protein resides in the virion membrane. The protein localises to the host cell membrane. It localises to the secreted. Its function is as follows. Trimeric GP1,2 complexes form the virion surface spikes and mediate the viral entry processes, with GP1 acting as the receptor-binding subunit and GP2 as the membrane fusion subunit. At later times of infection, down-regulates the expression of various host cell surface molecules that are essential for immune surveillance and cell adhesion. Down-modulates several integrins including ITGA1, ITGA2, ITGA3, ITGA4, ITGA5, ITGA6, ITGAV and ITGB1. This decrease in cell adhesion molecules may lead to cell detachment, contributing to the disruption of blood vessel integrity and hemorrhages developed during infection (cytotoxicity). Interacts with host TLR4 and thereby stimulates the differentiation and activation of monocytes leading to bystander death of T-lymphocytes. Down-regulates as well the function of host natural killer cells. Counteracts the antiviral effect of host BST2/tetherin that restricts release of progeny virions from infected cells. However, cooperates with VP40 and host BST2 to activate canonical NF-kappa-B pathway in a manner dependent on neddylation. Functions as a decoy for anti-GP1,2 antibodies thereby contributing to viral immune evasion. Interacts and activates host macrophages and dendritic cells inducing up-regulation of cytokine transcription. This effect is mediated throught activation of host TLR4. Functionally, responsible for binding to the receptor(s) on target cells. Interacts with CD209/DC-SIGN and CLEC4M/DC-SIGNR which act as cofactors for virus entry into dendritic cells (DCs) and endothelial cells. Binding to the macrophage specific lectin CLEC10A also seems to enhance virus infectivity. Interaction with FOLR1/folate receptor alpha may be a cofactor for virus entry in some cell types, although results are contradictory. Members of the Tyro3 receptor tyrosine kinase family also seem to be cell entry factors in filovirus infection. Once attached, the virions are internalized through clathrin-dependent endocytosis and/or macropinocytosis. After internalization of the virus into the endosomes of the host cell, proteolysis of GP1 by two cysteine proteases, CTSB/cathepsin B and CTSL/cathepsin L removes the glycan cap and allows GP1 binding to the host entry receptor NPC1. NPC1-binding, Ca(2+) and acidic pH induce a conformational change of GP2, which unmasks its fusion peptide and permit membranes fusion. In terms of biological role, acts as a class I viral fusion protein. Under the current model, the protein has at least 3 conformational states: pre-fusion native state, pre-hairpin intermediate state, and post-fusion hairpin state. During viral and target cell membrane fusion, the coiled coil regions (heptad repeats) assume a trimer-of-hairpins structure, positioning the fusion peptide in close proximity to the C-terminal region of the ectodomain. The formation of this structure appears to drive apposition and subsequent fusion of viral and target cell membranes. Responsible for penetration of the virus into the cell cytoplasm by mediating the fusion of the membrane of the endocytosed virus particle with the endosomal membrane. Low pH in endosomes induces an irreversible conformational change in GP2, releasing the fusion hydrophobic peptide. This Homo sapiens (Human) protein is Envelope glycoprotein (GP).